Reading from the N-terminus, the 412-residue chain is Serine hydroxymethyltransferase (412 aa).

Residues leucine 117 and 121–123 each bind (6S)-5,6,7,8-tetrahydrofolate; that span reads GHL. Residue lysine 226 is modified to N6-(pyridoxal phosphate)lysine. Residues glutamate 242 and 350 to 352 each bind (6S)-5,6,7,8-tetrahydrofolate; that span reads SPF.

This sequence belongs to the SHMT family. Homodimer. It depends on pyridoxal 5'-phosphate as a cofactor.

The protein resides in the cytoplasm. The enzyme catalyses (6R)-5,10-methylene-5,6,7,8-tetrahydrofolate + glycine + H2O = (6S)-5,6,7,8-tetrahydrofolate + L-serine. It functions in the pathway one-carbon metabolism; tetrahydrofolate interconversion. It participates in amino-acid biosynthesis; glycine biosynthesis; glycine from L-serine: step 1/1. Functionally, catalyzes the reversible interconversion of serine and glycine with tetrahydrofolate (THF) serving as the one-carbon carrier. Also exhibits THF-independent aldolase activity toward beta-hydroxyamino acids, producing glycine and aldehydes, via a retro-aldol mechanism. This is Serine hydroxymethyltransferase from Methanosarcina acetivorans (strain ATCC 35395 / DSM 2834 / JCM 12185 / C2A).